Reading from the N-terminus, the 211-residue chain is Endonuclease III (211 aa).

A HhH domain is found at 108–127 (REALEALAGVGRKTANVVLN). The [4Fe-4S] cluster site is built by C187, C194, C197, and C203.

Belongs to the Nth/MutY family. Requires [4Fe-4S] cluster as cofactor.

The catalysed reaction is 2'-deoxyribonucleotide-(2'-deoxyribose 5'-phosphate)-2'-deoxyribonucleotide-DNA = a 3'-end 2'-deoxyribonucleotide-(2,3-dehydro-2,3-deoxyribose 5'-phosphate)-DNA + a 5'-end 5'-phospho-2'-deoxyribonucleoside-DNA + H(+). In terms of biological role, DNA repair enzyme that has both DNA N-glycosylase activity and AP-lyase activity. The DNA N-glycosylase activity releases various damaged pyrimidines from DNA by cleaving the N-glycosidic bond, leaving an AP (apurinic/apyrimidinic) site. The AP-lyase activity cleaves the phosphodiester bond 3' to the AP site by a beta-elimination, leaving a 3'-terminal unsaturated sugar and a product with a terminal 5'-phosphate. This chain is Endonuclease III, found in Haemophilus influenzae (strain ATCC 51907 / DSM 11121 / KW20 / Rd).